The primary structure comprises 696 residues: Translation factor waclaw, mitochondrial (696 aa).

Residues 1–76 (MIVGYSVFFH…RNLSTTNQVK (76 aa)) constitute a mitochondrion transit peptide. Positions 97-278 (ERIRNFSIIA…RVIETVPPPQ (182 aa)) constitute a tr-type G domain. GTP contacts are provided by residues 106–113 (AHVDHGKS), 171–175 (DTPGH), and 225–228 (NKID).

Belongs to the TRAFAC class translation factor GTPase superfamily. Classic translation factor GTPase family. LepA subfamily.

The protein localises to the mitochondrion inner membrane. The catalysed reaction is GTP + H2O = GDP + phosphate + H(+). Its function is as follows. Promotes mitochondrial protein synthesis. May act as a fidelity factor of the translation reaction, by catalyzing a one-codon backward translocation of tRNAs on improperly translocated ribosomes. Binds to mitochondrial ribosomes in a GTP-dependent manner. In Drosophila melanogaster (Fruit fly), this protein is Translation factor waclaw, mitochondrial.